The sequence spans 360 residues: Chorismate synthase (360 aa).

2 residues coordinate NADP(+): R48 and R54. Residues R125 to S127, N242 to G243, G283, K298 to S302, and R324 contribute to the FMN site.

The protein belongs to the chorismate synthase family. In terms of assembly, homotetramer. FMNH2 is required as a cofactor.

It catalyses the reaction 5-O-(1-carboxyvinyl)-3-phosphoshikimate = chorismate + phosphate. It participates in metabolic intermediate biosynthesis; chorismate biosynthesis; chorismate from D-erythrose 4-phosphate and phosphoenolpyruvate: step 7/7. Its function is as follows. Catalyzes the anti-1,4-elimination of the C-3 phosphate and the C-6 proR hydrogen from 5-enolpyruvylshikimate-3-phosphate (EPSP) to yield chorismate, which is the branch point compound that serves as the starting substrate for the three terminal pathways of aromatic amino acid biosynthesis. This reaction introduces a second double bond into the aromatic ring system. In Gluconobacter oxydans (strain 621H) (Gluconobacter suboxydans), this protein is Chorismate synthase.